Here is a 166-residue protein sequence, read N- to C-terminus: METDLAAIVHKKRALLNAAFKQQDKKIAKYFAKPCENDAEKMLMLAAEIHGQVEQLEALLSVARASDADKREFARDCSDLDIDAQDLQRMCASNEPTYFAAKYDAATVLAAHPAAYDGFLGHSERFVDAMRSLNAPNADADYLAQRKCAAIRHLCALEYLVGLHTK.

This is an uncharacterized protein from Orgyia pseudotsugata (Douglas-fir tussock moth).